Reading from the N-terminus, the 179-residue chain is Inosine/xanthosine triphosphatase (179 aa).

Glu-71 contacts Mg(2+). A substrate-binding site is contributed by 71–72; it reads EA.

Belongs to the YjjX NTPase family. In terms of assembly, homodimer. It depends on Mg(2+) as a cofactor. Requires Mn(2+) as cofactor.

It carries out the reaction XTP + H2O = XDP + phosphate + H(+). It catalyses the reaction ITP + H2O = IDP + phosphate + H(+). Its function is as follows. Phosphatase that hydrolyzes non-canonical purine nucleotides such as XTP and ITP to their respective diphosphate derivatives. Probably excludes non-canonical purines from DNA/RNA precursor pool, thus preventing their incorporation into DNA/RNA and avoiding chromosomal lesions. The protein is Inosine/xanthosine triphosphatase of Shewanella sp. (strain MR-4).